Here is a 307-residue protein sequence, read N- to C-terminus: Cytochrome c1 1, heme protein, mitochondrial (307 aa).

Residues 1 to 64 constitute a mitochondrion transit peptide; the sequence is MVGGGVIQQI…LLSFSTVASA (64 aa). The Mitochondrial intermembrane segment spans residues 65 to 270; the sequence is DEAEHGLESP…EPEMEERKLM (206 aa). The 157-residue stretch at 90 to 246 folds into the Cytochrome c domain; the sequence is ASIRRGHQVY…YEDGVPATEA (157 aa). Heme c-binding residues include C103, C106, H107, and M226. Residues 271-288 traverse the membrane as a helical segment; sequence GFKWIFLLSLALLQAAYY. At 289–307 the chain is on the mitochondrial matrix side; that stretch reads RRLKWSVLKSRKLVLDVVN.

It belongs to the cytochrome c family. As to quaternary structure, component of the ubiquinol-cytochrome c oxidoreductase (cytochrome b-c1 complex, complex III, CIII), a multisubunit enzyme composed of 10 subunits. The complex is composed of 3 respiratory subunits cytochrome b (MT-CYB), cytochrome c1 (CYC1-1 or CYC1-2) and Rieske protein (UCR1-1 or UCR1-2), 2 core protein subunits MPPalpha1 (or MPPalpha2) and MPPB, and 5 low-molecular weight protein subunits QCR7-1 (or QCR7-2), UCRQ-1 (or UCRQ-2), QCR9, UCRY and probably QCR6-1 (or QCR6-2). The complex exists as an obligatory dimer and forms supercomplexes (SCs) in the inner mitochondrial membrane with NADH-ubiquinone oxidoreductase (complex I, CI), resulting in different assemblies (supercomplexes SCI(1)III(2) and SCI(2)III(4)). Binds 1 heme c group covalently per subunit.

The protein resides in the mitochondrion inner membrane. Its function is as follows. Component of the ubiquinol-cytochrome c oxidoreductase, a multisubunit transmembrane complex that is part of the mitochondrial electron transport chain which drives oxidative phosphorylation. The respiratory chain contains 3 multisubunit complexes succinate dehydrogenase (complex II, CII), ubiquinol-cytochrome c oxidoreductase (cytochrome b-c1 complex, complex III, CIII) and cytochrome c oxidase (complex IV, CIV), that cooperate to transfer electrons derived from NADH and succinate to molecular oxygen, creating an electrochemical gradient over the inner membrane that drives transmembrane transport and the ATP synthase. The cytochrome b-c1 complex catalyzes electron transfer from ubiquinol to cytochrome c, linking this redox reaction to translocation of protons across the mitochondrial inner membrane, with protons being carried across the membrane as hydrogens on the quinol. In the process called Q cycle, 2 protons are consumed from the matrix, 4 protons are released into the intermembrane space and 2 electrons are passed to cytochrome c. Cytochrome c1 is a catalytic core subunit containing a c-type heme. It transfers electrons from the [2Fe-2S] iron-sulfur cluster of the Rieske protein to cytochrome c. The chain is Cytochrome c1 1, heme protein, mitochondrial (CYC1-1) from Arabidopsis thaliana (Mouse-ear cress).